Here is a 603-residue protein sequence, read N- to C-terminus: MAMNHHQRRSVPRLLTPIALSIVLSACSTQPSSPDVVDITAQPLLTAQTYLMRADASQGNQQNDWLIMALKAAIEENNPDQAQLLIMRLAKQPLTPTQQAQWQLLRAQLLANTEQYQEALEQLSFQANWSLPQVQWQQYHQLRADIFTALDRSFDSTRELVALYGLSSNKDKEALADQIWANLNHYSASKIIKLSTEPDEAQLDGWLQLAIYMKTLGSDLPQLKNTLEKWLAENPQHPAAIYTPKAITDILALEIVKPTNTALLLPLTGKFAKQAQFIRDGFVFAMMNDADRQTNATLTIIDTNAETLESVDAILTSKQIDFVVGPLIKGNIEKLQQFQQSRGQMIPTLALNIPDQIDTTAGACYLALSPEQEVAQAAKHLFTQGYRYPLILAPQNAYGERVVEAFNEEWRRYSKNKVAVNLFGDKRQLQRNINSIFGLQDSQQNIAQMESLLGMGLESQPRSRRDIDAVYIVANSSELTLIKPFIEVAINPDTRPPKLFSNSNSNTGGRQYEDLSGVTYSDIPLLIQPAPSIKEQLTQIWPESSNAERRLQALGMDAYRLMVELPQMKIVEGYTIDGQTGVLSIDEQCVVQREISWAEHGVR.

An N-terminal signal peptide occupies residues 1–26 (MAMNHHQRRSVPRLLTPIALSIVLSA). Cys27 carries the N-palmitoyl cysteine lipid modification. The S-diacylglycerol cysteine moiety is linked to residue Cys27.

It belongs to the LpoA family. Interacts with PBP1a.

The protein localises to the cell outer membrane. Its function is as follows. Regulator of peptidoglycan synthesis that is essential for the function of penicillin-binding protein 1A (PBP1a). The sequence is that of Penicillin-binding protein activator LpoA from Vibrio cholerae serotype O1 (strain ATCC 39541 / Classical Ogawa 395 / O395).